Here is an 82-residue protein sequence, read N- to C-terminus: Small ribosomal subunit protein bS16 (82 aa).

The protein belongs to the bacterial ribosomal protein bS16 family.

The polypeptide is Small ribosomal subunit protein bS16 (Pectobacterium atrosepticum (strain SCRI 1043 / ATCC BAA-672) (Erwinia carotovora subsp. atroseptica)).